The following is a 644-amino-acid chain: Major core protein OPG129 (644 aa).

A propeptide spanning residues 1–61 (MEAVVNSDVF…IVDDDFISAG (61 aa)) is cleaved from the precursor. The disordered stretch occupies residues 61 to 80 (GARNQRTKPKRAGNDQAQQT).

Belongs to the orthopoxvirus OPG129 family. Post-translationally, the 73-kDa precursor is cleaved to a mature protein of 60 kDa during virion maturation. Proteolytic cleavage of major core proteins OPG129, OPG136, and OPG098, which occurs at a late stage of core formation, is required for production of infectious mature virions (MV).

It is found in the virion. Its function is as follows. Major component of the virion core that undergoes proteolytic processing during the immature virion (IV) to mature virion (MV) transition. Essential for the formation of a structurally normal core. The sequence is that of Major core protein OPG129 (OPG129) from Variola virus (isolate Human/India/Ind3/1967) (VARV).